The sequence spans 367 residues: Porin Omp2a (367 aa).

The signal sequence occupies residues Met-1–Ala-22.

The protein belongs to the alphaproteobacteria porin family. Monomer.

The protein resides in the cell outer membrane. Functionally, forms passive diffusion pores that allow small molecular weight hydrophilic materials across the outer membrane. The sequence is that of Porin Omp2a (omp2a) from Brucella melitensis biotype 1 (strain ATCC 23456 / CCUG 17765 / NCTC 10094 / 16M).